We begin with the raw amino-acid sequence, 267 residues long: Hydroxyethylthiazole kinase (267 aa).

Met-46 lines the substrate pocket. ATP-binding residues include Arg-122 and Ser-168. Residue Gly-195 participates in substrate binding.

This sequence belongs to the Thz kinase family. It depends on Mg(2+) as a cofactor.

The enzyme catalyses 5-(2-hydroxyethyl)-4-methylthiazole + ATP = 4-methyl-5-(2-phosphooxyethyl)-thiazole + ADP + H(+). It functions in the pathway cofactor biosynthesis; thiamine diphosphate biosynthesis; 4-methyl-5-(2-phosphoethyl)-thiazole from 5-(2-hydroxyethyl)-4-methylthiazole: step 1/1. In terms of biological role, catalyzes the phosphorylation of the hydroxyl group of 4-methyl-5-beta-hydroxyethylthiazole (THZ). In Nitratidesulfovibrio vulgaris (strain ATCC 29579 / DSM 644 / CCUG 34227 / NCIMB 8303 / VKM B-1760 / Hildenborough) (Desulfovibrio vulgaris), this protein is Hydroxyethylthiazole kinase.